A 157-amino-acid polypeptide reads, in one-letter code: MLKTTKKSLLVFMGGFFLIFGVDQAIKYAILEGFRYESLMVDIVLVFNKGVAFSLLSFLEGGLKYLQILLILGLFIFLIRQIELFKTHAIEFGMVFGAGVSNVLDRFVHGGVVDYVYYHYGFDFAIFNFADVMIDVGVGVLLLRQFFFKQKQNKIKA.

The next 4 membrane-spanning stretches (helical) occupy residues 10–30 (LVFM…KYAI), 38–58 (SLMV…LLSF), 59–79 (LEGG…IFLI), and 84–104 (LFKT…SNVL). Active-site residues include Asp114 and Asp131. The helical transmembrane segment at 122–142 (FDFAIFNFADVMIDVGVGVLL) threads the bilayer.

It belongs to the peptidase A8 family.

It localises to the cell inner membrane. It catalyses the reaction Release of signal peptides from bacterial membrane prolipoproteins. Hydrolyzes -Xaa-Yaa-Zaa-|-(S,diacylglyceryl)Cys-, in which Xaa is hydrophobic (preferably Leu), and Yaa (Ala or Ser) and Zaa (Gly or Ala) have small, neutral side chains.. It functions in the pathway protein modification; lipoprotein biosynthesis (signal peptide cleavage). This protein specifically catalyzes the removal of signal peptides from prolipoproteins. This is Lipoprotein signal peptidase from Helicobacter pylori (strain HPAG1).